We begin with the raw amino-acid sequence, 375 residues long: Alcohol dehydrogenase 1 (375 aa).

The residue at position 1 (S1) is an N-acetylserine. Zn(2+) is bound by residues C46, H67, C97, C100, C103, C111, and C175. Residues 200-205 (GLGGVG), D224, K229, 293-295 (VGV), and R370 each bind NAD(+).

Belongs to the zinc-containing alcohol dehydrogenase family. Class-I subfamily. Homodimer. The cofactor is Zn(2+).

It localises to the cytoplasm. The enzyme catalyses a primary alcohol + NAD(+) = an aldehyde + NADH + H(+). It catalyses the reaction a secondary alcohol + NAD(+) = a ketone + NADH + H(+). The chain is Alcohol dehydrogenase 1 (ADH1) from Coturnix japonica (Japanese quail).